The sequence spans 236 residues: Small ribosomal subunit protein uS5 (236 aa).

Positions 61 to 124 (ENQEVLDIAL…NYAKLNIIEI (64 aa)) constitute an S5 DRBM domain.

It belongs to the universal ribosomal protein uS5 family. As to quaternary structure, part of the 30S ribosomal subunit. Contacts protein S4.

Functionally, with S4 and S12 plays an important role in translational accuracy. The chain is Small ribosomal subunit protein uS5 from Pyrococcus furiosus (strain ATCC 43587 / DSM 3638 / JCM 8422 / Vc1).